The sequence spans 388 residues: Succinate--CoA ligase [ADP-forming] subunit beta (388 aa).

Residues 9 to 244 (KEILRKFGVA…LDEEDPAEIE (236 aa)) enclose the ATP-grasp domain. ATP is bound by residues lysine 46, 53-55 (GRG), glutamate 99, alanine 102, and glutamate 107. Asparagine 199 and aspartate 213 together coordinate Mg(2+). Substrate contacts are provided by residues asparagine 264 and 321–323 (GIM).

This sequence belongs to the succinate/malate CoA ligase beta subunit family. As to quaternary structure, heterotetramer of two alpha and two beta subunits. Mg(2+) serves as cofactor.

It catalyses the reaction succinate + ATP + CoA = succinyl-CoA + ADP + phosphate. The enzyme catalyses GTP + succinate + CoA = succinyl-CoA + GDP + phosphate. It functions in the pathway carbohydrate metabolism; tricarboxylic acid cycle; succinate from succinyl-CoA (ligase route): step 1/1. Functionally, succinyl-CoA synthetase functions in the citric acid cycle (TCA), coupling the hydrolysis of succinyl-CoA to the synthesis of either ATP or GTP and thus represents the only step of substrate-level phosphorylation in the TCA. The beta subunit provides nucleotide specificity of the enzyme and binds the substrate succinate, while the binding sites for coenzyme A and phosphate are found in the alpha subunit. This Burkholderia vietnamiensis (strain G4 / LMG 22486) (Burkholderia cepacia (strain R1808)) protein is Succinate--CoA ligase [ADP-forming] subunit beta.